Reading from the N-terminus, the 389-residue chain is Flap endonuclease 1 (389 aa).

The tract at residues 1–105 is N-domain; that stretch reads MGIKGLNKLL…GELAKRKERR (105 aa). Mg(2+) is bound at residue Asp-34. The DNA site is built by Arg-47 and Arg-71. 5 residues coordinate Mg(2+): Asp-87, Glu-170, Glu-172, Asp-191, and Asp-193. Residues 134–265 form an I-domain region; sequence DVTRFEKRTV…QTALKLMKEH (132 aa). Glu-170 is a DNA binding site. DNA is bound by residues Gly-243 and Asp-245. Asp-245 lines the Mg(2+) pocket. The segment at 351–359 is interaction with PCNA; sequence PQARLDGFF. Residues 360-389 form a disordered region; that stretch reads KVMPKEGGEKRKADDKKTKGKKPATKKAKK. The segment covering 362–376 has biased composition (basic and acidic residues); that stretch reads MPKEGGEKRKADDKK. Basic residues predominate over residues 377–389; the sequence is TKGKKPATKKAKK.

It belongs to the XPG/RAD2 endonuclease family. FEN1 subfamily. Interacts with PCNA. Three molecules of FEN1 bind to one PCNA trimer with each molecule binding to one PCNA monomer. PCNA stimulates the nuclease activity without altering cleavage specificity. It depends on Mg(2+) as a cofactor. Phosphorylated. Phosphorylation upon DNA damage induces relocalization to the nuclear plasma.

The protein localises to the nucleus. Its subcellular location is the nucleolus. It localises to the nucleoplasm. It is found in the mitochondrion. Structure-specific nuclease with 5'-flap endonuclease and 5'-3' exonuclease activities involved in DNA replication and repair. During DNA replication, cleaves the 5'-overhanging flap structure that is generated by displacement synthesis when DNA polymerase encounters the 5'-end of a downstream Okazaki fragment. It enters the flap from the 5'-end and then tracks to cleave the flap base, leaving a nick for ligation. Also involved in the long patch base excision repair (LP-BER) pathway, by cleaving within the apurinic/apyrimidinic (AP) site-terminated flap. Acts as a genome stabilization factor that prevents flaps from equilibrating into structures that lead to duplications and deletions. Also possesses 5'-3' exonuclease activity on nicked or gapped double-stranded DNA, and exhibits RNase H activity. Also involved in replication and repair of rDNA and in repairing mitochondrial DNA. This chain is Flap endonuclease 1, found in Yarrowia lipolytica (strain CLIB 122 / E 150) (Yeast).